Reading from the N-terminus, the 225-residue chain is Fibroblast growth factor 11 (225 aa).

Positions 1-28 are disordered; the sequence is MAALASSLIRQKREVREPGGSRPVSAQR.

It belongs to the heparin-binding growth factors family. In terms of tissue distribution, brain and eye, and in a segmental pattern of the embryonic body wall. In adult olfactory bulb, hippocampus and most concentrated in Purkinje cell layer of the cerebellum.

The protein localises to the nucleus. Probably involved in nervous system development and function. The protein is Fibroblast growth factor 11 (Fgf11) of Mus musculus (Mouse).